Consider the following 484-residue polypeptide: Glutamyl-tRNA(Gln) amidotransferase subunit A (484 aa).

Active-site charge relay system residues include Lys-74 and Ser-149. The active-site Acyl-ester intermediate is Ser-173.

It belongs to the amidase family. GatA subfamily. As to quaternary structure, heterotrimer of A, B and C subunits.

It catalyses the reaction L-glutamyl-tRNA(Gln) + L-glutamine + ATP + H2O = L-glutaminyl-tRNA(Gln) + L-glutamate + ADP + phosphate + H(+). Its function is as follows. Allows the formation of correctly charged Gln-tRNA(Gln) through the transamidation of misacylated Glu-tRNA(Gln) in organisms which lack glutaminyl-tRNA synthetase. The reaction takes place in the presence of glutamine and ATP through an activated gamma-phospho-Glu-tRNA(Gln). The chain is Glutamyl-tRNA(Gln) amidotransferase subunit A from Prochlorococcus marinus subsp. pastoris (strain CCMP1986 / NIES-2087 / MED4).